We begin with the raw amino-acid sequence, 461 residues long: Toxin CfTX-B (461 aa).

The first 24 residues, 1–24 (MDPRISSRLRALALLVFVISITDG), serve as a signal peptide directing secretion. The propeptide occupies 25 to 31 (IPNRAKR).

Belongs to the jellyfish toxin family. Type II subfamily. Oligomer. In terms of processing, contains 2 disulfide bonds. Nematocytes.

The protein resides in the secreted. Its subcellular location is the nematocyst. It localises to the target cell membrane. In terms of biological role, the fraction containing this toxin and CfTX-B shows potent hemolytic activity. This fraction causes minor effects on the cardiovascular system of anesthetized rats (at 25 ug/kg), since it has no significant effects on heart rate but produces relatively small increases in mean arterial pressure. The sequence is that of Toxin CfTX-B from Chironex fleckeri (Australian box jellyfish).